Consider the following 816-residue polypeptide: Larval serum protein 1 alpha chain (816 aa).

Positions 1-16 are cleaved as a signal peptide; sequence MKFAIAFLACVAVVTA.

This sequence belongs to the hemocyanin family. Heterohexamer, composed of three subunits, alpha, beta and gamma. In terms of tissue distribution, larval hemolymph.

It localises to the secreted. It is found in the extracellular space. In terms of biological role, larval storage protein (LSP) which may serve as a store of amino acids for synthesis of adult proteins. The polypeptide is Larval serum protein 1 alpha chain (Lsp1alpha) (Drosophila melanogaster (Fruit fly)).